The sequence spans 136 residues: uncharacterized protein (136 aa).

The tract at residues 74–97 (RADPGRKGRTQPLPTQGSARRFLH) is disordered.

This is an uncharacterized protein from Saccharomyces cerevisiae (strain ATCC 204508 / S288c) (Baker's yeast).